Consider the following 506-residue polypeptide: UDP-glycosyltransferase eriJ (506 aa).

Belongs to the UDP-glycosyltransferase family.

It catalyses the reaction 11-O-acetylcyathatriol + UDP-alpha-D-xylose = erinacine Q + UDP + H(+). It carries out the reaction 11-O-acetylcyathatriol + UDP-alpha-D-glucose = erinacine Q2 + UDP + H(+). It functions in the pathway secondary metabolite biosynthesis. UDP-glycosyltransferase; part of the gene cluster that mediates the biosynthesis of erinacines, cyathane-xylosides that show unique biological activities, including leishmanicidal activity, stimulating activity for nerve growth-factor synthesis, and agonistic activity toward the kappa opioid receptor. Within the pathway, eriJ tranfers xylose from UDP-xylose onto C-14 of 11-O-acetyl-cyathatriol to form eracine Q, and, at a lower rate, glucose from UDP-D-glucose to produce eracine Q2. The first step of the erinacines biosynthesis pathway is catalyzed by the geranylgeranyl diphosphate (GGPP) synthase eriE via conversion of farnesyl pyrophosphate and isopentyl pyrophosphate into geranylgeranyl pyrophosphate (GGPP). GGPP is then substrate of the diterpene cyclase eriG for the production of cyatha-3,12-diene. The cytochrome P450 monooxygenase eriI then hydroxylates cyatha-3,12-diene at C-14 of the seven-membered ring to produce erinacol, which is further hydroxylated at C-15 by the cytochrome P450 monooxygenase eriC to yield cyathadiol. The cytochrome P450 monooxygenase eriA then catalyzes C-11 hydroxylation in the presence of the short chain dehydrogenase/reductase (SDR) eriH, which leads to the production of cyathatriol. The acetyltransferase eriL converts cyathatriol into 11-O-acetyl-cyathatriol. The SDR eriH catalyzes further oxidation of 11-O-acetyl-cyathatriol into 1-O-acetylcyathin A3. Finally, the glycosyl transferase eriJ tranfers xylose from UDP-xylose onto C-14 of 11-O-acetyl-cyathatriol to form eracine Q. EriJ is also able to convert 11-O-acetyl-cyathatriol to eracine Q2 by using UDP-D-glucose as cosubstrate, but at a lower rate. This chain is UDP-glycosyltransferase eriJ, found in Hericium erinaceus (Lion's mane mushroom).